A 333-amino-acid chain; its full sequence is Ketol-acid reductoisomerase (NADP(+)) (333 aa).

The 181-residue stretch at 2 to 182 (ANIYYDDSCD…GGGRAGILET (181 aa)) folds into the KARI N-terminal Rossmann domain. NADP(+)-binding positions include 25 to 28 (YGSQ), arginine 48, serine 51, serine 53, and 83 to 86 (DTIQ). Histidine 108 is an active-site residue. Glycine 134 contributes to the NADP(+) binding site. The region spanning 183–331 (SFREETETDL…TKLRSMMKWL (149 aa)) is the KARI C-terminal knotted domain. Mg(2+) contacts are provided by aspartate 191, glutamate 195, glutamate 227, and glutamate 231. Residue serine 252 participates in substrate binding.

The protein belongs to the ketol-acid reductoisomerase family. Mg(2+) serves as cofactor.

It catalyses the reaction (2R)-2,3-dihydroxy-3-methylbutanoate + NADP(+) = (2S)-2-acetolactate + NADPH + H(+). The catalysed reaction is (2R,3R)-2,3-dihydroxy-3-methylpentanoate + NADP(+) = (S)-2-ethyl-2-hydroxy-3-oxobutanoate + NADPH + H(+). Its pathway is amino-acid biosynthesis; L-isoleucine biosynthesis; L-isoleucine from 2-oxobutanoate: step 2/4. The protein operates within amino-acid biosynthesis; L-valine biosynthesis; L-valine from pyruvate: step 2/4. Involved in the biosynthesis of branched-chain amino acids (BCAA). Catalyzes an alkyl-migration followed by a ketol-acid reduction of (S)-2-acetolactate (S2AL) to yield (R)-2,3-dihydroxy-isovalerate. In the isomerase reaction, S2AL is rearranged via a Mg-dependent methyl migration to produce 3-hydroxy-3-methyl-2-ketobutyrate (HMKB). In the reductase reaction, this 2-ketoacid undergoes a metal-dependent reduction by NADPH to yield (R)-2,3-dihydroxy-isovalerate. The chain is Ketol-acid reductoisomerase (NADP(+)) from Leptospira biflexa serovar Patoc (strain Patoc 1 / Ames).